The following is a 110-amino-acid chain: UPF0060 membrane protein Mmwyl1_1139 (110 aa).

4 helical membrane-spanning segments follow: residues 7 to 27 (ISLFMLTALAEIIGCYLPYLW), 33 to 53 (TIWLLVPAALSLAVFTWLLTL), 63 to 83 (AAYGGVYIFMAVLWLWIVDGI), and 87 to 107 (TWDMIGSAVALLGMAIIMFAP).

This sequence belongs to the UPF0060 family.

It localises to the cell inner membrane. This is UPF0060 membrane protein Mmwyl1_1139 from Marinomonas sp. (strain MWYL1).